Reading from the N-terminus, the 254-residue chain is MAETAPLRVQLIARTEFTVPPDVPWETDAEGGAALVEFAGRACYQSWSKPNPRTATNASYLRHIIDVGHLSVLEHASVSFYITGISRSCTHELIRHRHFSYSQLSQRYVPENDSQVVVPPGIEGDAELEGLFTAAADASRAAYAELLAKLEAKLMGDEPREGRATLRRKQARQAARSVLPNATETRIVVTGNYRAWRHFIAMRASEHADLEIRRLAIACLRELVAVAPAVFADFEIYPLADGTEVATTPLVTEA.

The ThyX domain maps to 7 to 237 (LRVQLIARTE…PAVFADFEIY (231 aa)). FAD-binding positions include serine 71, 95-97 (RHR), and glutamine 103. DUMP contacts are provided by residues 92 to 95 (ELIR), 103 to 107 (QLSQR), and arginine 176. The ThyX motif motif lies at 95 to 105 (RHRHFSYSQLS). Residues 192–194 (NYR) and histidine 198 each bind FAD. Arginine 203 lines the dUMP pocket. Arginine 203 acts as the Involved in ionization of N3 of dUMP, leading to its activation in catalysis.

Belongs to the thymidylate synthase ThyX family. In terms of assembly, homotetramer. Requires FAD as cofactor.

The enzyme catalyses dUMP + (6R)-5,10-methylene-5,6,7,8-tetrahydrofolate + NADPH + H(+) = dTMP + (6S)-5,6,7,8-tetrahydrofolate + NADP(+). It participates in pyrimidine metabolism; dTTP biosynthesis. Functionally, catalyzes the reductive methylation of 2'-deoxyuridine-5'-monophosphate (dUMP) to 2'-deoxythymidine-5'-monophosphate (dTMP) while utilizing 5,10-methylenetetrahydrofolate (mTHF) as the methyl donor, and NADPH and FADH(2) as the reductant. This is Flavin-dependent thymidylate synthase from Mycobacterium sp. (strain KMS).